Reading from the N-terminus, the 365-residue chain is Eukaryotic translation initiation factor 3 subunit H (365 aa).

Residues 11-160 enclose the MPN domain; it reads VKVDALVVMK…LRAFRLSSKF (150 aa).

The protein belongs to the eIF-3 subunit H family. Component of the eukaryotic translation initiation factor 3 (eIF-3) complex.

Its subcellular location is the cytoplasm. In terms of biological role, component of the eukaryotic translation initiation factor 3 (eIF-3) complex, which is involved in protein synthesis of a specialized repertoire of mRNAs and, together with other initiation factors, stimulates binding of mRNA and methionyl-tRNAi to the 40S ribosome. The eIF-3 complex specifically targets and initiates translation of a subset of mRNAs involved in cell proliferation. This is Eukaryotic translation initiation factor 3 subunit H from Aspergillus oryzae (strain ATCC 42149 / RIB 40) (Yellow koji mold).